A 535-amino-acid chain; its full sequence is CTP synthase (535 aa).

The interval 1 to 268 (MPNKYIVVTG…VSKILSRLKL (268 aa)) is amidoligase domain. CTP is bound at residue Ser-14. Ser-14 lines the UTP pocket. 15 to 20 (SVGKGT) serves as a coordination point for ATP. Position 55 (Tyr-55) interacts with L-glutamine. An ATP-binding site is contributed by Asp-72. Asp-72 and Glu-142 together coordinate Mg(2+). Residues 149–151 (DIE), 189–194 (KTKPLQ), and Lys-225 contribute to the CTP site. Residues 189–194 (KTKPLQ) and Lys-225 each bind UTP. An ATP-binding site is contributed by Val-243. The 234-residue stretch at 302–535 (YTKLKDSYIS…LGFIRAVASL (234 aa)) folds into the Glutamine amidotransferase type-1 domain. L-glutamine is bound at residue Gly-359. The active-site Nucleophile; for glutamine hydrolysis is the Cys-386. L-glutamine is bound by residues 387 to 390 (FGFQ), Glu-410, and Arg-467. Residues His-511 and Glu-513 contribute to the active site.

The protein belongs to the CTP synthase family. As to quaternary structure, homotetramer in the presence of ATP and UTP. The enzyme dissociates into homodimers in the absence of substrate nucleotides.

The catalysed reaction is UTP + L-glutamine + ATP + H2O = CTP + L-glutamate + ADP + phosphate + 2 H(+). It carries out the reaction L-glutamine + H2O = L-glutamate + NH4(+). The enzyme catalyses UTP + NH4(+) + ATP = CTP + ADP + phosphate + 2 H(+). Its pathway is pyrimidine metabolism; CTP biosynthesis via de novo pathway; CTP from UDP: step 2/2. With respect to regulation, allosterically activated by GTP, when glutamine is the substrate; GTP has no effect on the reaction when ammonia is the substrate. The allosteric effector GTP functions by stabilizing the protein conformation that binds the tetrahedral intermediate(s) formed during glutamine hydrolysis. Inhibited by the product CTP, via allosteric rather than competitive inhibition. Catalyzes the ATP-dependent amination of UTP to CTP with either L-glutamine or ammonia as the source of nitrogen. Regulates intracellular CTP levels through interactions with the four ribonucleotide triphosphates. In Saccharolobus solfataricus (strain ATCC 35092 / DSM 1617 / JCM 11322 / P2) (Sulfolobus solfataricus), this protein is CTP synthase.